The sequence spans 302 residues: MTLRHPILAELDPARPILIAGPTASGKSALALEIAEAQGGTVVNADALQVWSCWRLLTARPTAEDEARAPHALYGHVAPDRAYSVGAWLAEVAALMDKGCDSGRGRLIVTGGTGLYLNALSRGLAVIPPTPPEIRAQADQLVRQPGGLARMIEDLDSSTRARIDLRNPARVQRAWEVLTTTGRGIAAWQAETPPPLIDPAAAHLLVLNPDRDWLAERIARRFHLMLEQGALDEVRAMLPHWNPDALWAKAIGAPELVAHLQGRIDLDEAARRAVIATRQYAKAQRSFFRGRMRDWRWIGIGG.

21 to 28 (GPTASGKS) provides a ligand contact to ATP. 23 to 28 (TASGKS) is a binding site for substrate.

This sequence belongs to the IPP transferase family. Monomer. Mg(2+) serves as cofactor.

It catalyses the reaction adenosine(37) in tRNA + dimethylallyl diphosphate = N(6)-dimethylallyladenosine(37) in tRNA + diphosphate. Its function is as follows. Catalyzes the transfer of a dimethylallyl group onto the adenine at position 37 in tRNAs that read codons beginning with uridine, leading to the formation of N6-(dimethylallyl)adenosine (i(6)A). In Paracoccus denitrificans (strain Pd 1222), this protein is tRNA dimethylallyltransferase.